The chain runs to 127 residues: MKKIIAITGFAMLGGGLREGLSLLVTWPQHFWITCLINIVGAFVLSLITNLLPARLPVSEDIVIGMSVGFVGSFTTFSTFTFETLQSFQSGHSVLALSYVAASLGLGLLAGLAGNFLSTYWLPKEEF.

4 helical membrane passes run 4–24 (IIAITGFAMLGGGLREGLSLL), 31–51 (FWITCLINIVGAFVLSLITNL), 62–82 (IVIGMSVGFVGSFTTFSTFTF), and 94–114 (VLALSYVAASLGLGLLAGLAG). Na(+)-binding residues include glycine 72 and threonine 75.

The protein belongs to the fluoride channel Fluc/FEX (TC 1.A.43) family.

It is found in the cell membrane. It carries out the reaction fluoride(in) = fluoride(out). Its activity is regulated as follows. Na(+) is not transported, but it plays an essential structural role and its presence is essential for fluoride channel function. Its function is as follows. Fluoride-specific ion channel. Important for reducing fluoride concentration in the cell, thus reducing its toxicity. The chain is Fluoride-specific ion channel FluC 2 from Lactiplantibacillus plantarum (strain ATCC BAA-793 / NCIMB 8826 / WCFS1) (Lactobacillus plantarum).